A 166-amino-acid chain; its full sequence is Large ribosomal subunit protein eL21 (166 aa).

Belongs to the eukaryotic ribosomal protein eL21 family. In terms of assembly, component of the large ribosomal subunit.

It localises to the cytoplasm. The protein resides in the cytosol. It is found in the endoplasmic reticulum. Functionally, component of the large ribosomal subunit. The ribosome is a large ribonucleoprotein complex responsible for the synthesis of proteins in the cell. In Entamoeba histolytica (strain ATCC 30459 / HM-1:IMSS / ABRM), this protein is Large ribosomal subunit protein eL21 (RPL21).